The primary structure comprises 154 residues: MKCPFCTHPDTRVADSRLMEERNAVRRRRHCPNCGKRFGTLETAELKMPAVIGPDKKRSPFNAQRLRNDLTAAARKSALTPEQIDETVRLTEHRLYTSGQRDIPSAALADMVLKELLRQDTEAAVRFAALHKRFDNPADFASWLAQAVKTGGKA.

A zinc finger lies at 3–34 (CPFCTHPDTRVADSRLMEERNAVRRRRHCPNC). Residues 49–139 (PAVIGPDKKR…LHKRFDNPAD (91 aa)) enclose the ATP-cone domain.

Belongs to the NrdR family. Zn(2+) serves as cofactor.

Functionally, negatively regulates transcription of bacterial ribonucleotide reductase nrd genes and operons by binding to NrdR-boxes. The sequence is that of Transcriptional repressor NrdR from Neisseria meningitidis serogroup A / serotype 4A (strain DSM 15465 / Z2491).